Consider the following 448-residue polypeptide: MPSAVDYSELGGSLPAIASLNASYSQASLSLPSPYYCPLPPGERKAFSDVRRTFCLFVTFDLLFITLLWIIELNISKSIWNSLENEVVHYNFKSSFFDIFLLAVFRFLCLQLGYAAFRLRHWWVIAITTLVTTAFLIAKVILSDLFSQNAFGYVLPITSFVVAWLETWFLDFKVLTQEAEDERVYLAAVNAACEPAPLICPRPVSDGQFYSPPESLAGSEDDLDEEGLGRRAVTEQEKAFVRQGREAMAVVEQILTQEENWKFEKTNELGDAVYTLEIPFHGKTFILKGLLQCTAELVYQEVILQPEKMVQWNRTVSVCQILQRVDDNTMVSYDVSAGAAGGVVSPRDFVNVRRVERRRDCYISAGMATNHNSKPHHSRYVRGENGPGGFVVLKSSSNPSVCTFIWVLNTDLKGRLPRYLIHQSLAATMFEFMSHLRQRINEVHVSYR.

Positions 47–219 constitute an MENTAL domain; the sequence is FSDVRRTFCL…YSPPESLAGS (173 aa). Transmembrane regions (helical) follow at residues 53–73, 96–116, 122–142, and 150–170; these read TFCLFVTFDLLFITLLWIIEL, FFDIFLLAVFRFLCLQLGYAA, WWVIAITTLVTTAFLIAKVIL, and AFGYVLPITSFVVAWLETWFL. Residues 208–214 carry the FFAT motif; it reads QFYSPPE. An START domain is found at 232-445; sequence AVTEQEKAFV…LRQRINEVHV (214 aa).

The protein belongs to the STARD3 family. Homodimer. Post-translationally, phosphorylated. Phosphorylation allows the tethering of two membranes that participates in the formation of ER-endosome contacts. Phosphorylation of FFAT motif drives membrane tethering between the endoplasmic reticulum and late endosomes that in turn allows the efficient transport of sterol mediated by the START domain.

Its subcellular location is the late endosome membrane. The enzyme catalyses cholesterol(in) = cholesterol(out). Its function is as follows. Sterol-binding protein that mediates cholesterol transport from the endoplasmic reticulum to endosomes. The sterol transport mechanism is triggered by phosphorylation of FFAT motif that leads to membrane tethering between the endoplasmic reticulum and late endosomes. Acts as a lipid transfer protein that redirects sterol to the endosome at the expense of the cell membrane and favors membrane formation inside endosomes. This Danio rerio (Zebrafish) protein is StAR-related lipid transfer protein 3.